Consider the following 361-residue polypeptide: Transmembrane protein 116 (361 aa).

7 consecutive transmembrane segments (helical) span residues 29 to 49 (WIQM…ILYA), 64 to 84 (FLLS…GLLF), 103 to 123 (TLYM…YTGL), 147 to 167 (LGPV…FVAG), 210 to 230 (CMAI…IFMG), 261 to 281 (MVLY…LATM), and 295 to 315 (VALY…NCLV).

It localises to the membrane. This is Transmembrane protein 116 (tmem116) from Danio rerio (Zebrafish).